We begin with the raw amino-acid sequence, 646 residues long: Zinc finger protein 493 (646 aa).

The segment at 26–48 (FQCDKYVKVFHKLLNSNRHNTKH) adopts a C2H2-type 1; degenerate zinc-finger fold. 2 C2H2-type zinc fingers span residues 54-76 (FKCK…KRIH) and 82-104 (YRCE…RRVH). The C2H2-type 4; degenerate zinc-finger motif lies at 109 to 131 (SYKYECGKSFNQDSNLTTHKRIH). The segment at 137-159 (YKCEECGTSFYQFSYLTRHKLIH) adopts a C2H2-type 5 zinc-finger fold. The C2H2-type 6; degenerate zinc finger occupies 165-187 (YKCEQYGKTFNQSSTLTGHKIIH). The segment at 193–215 (YKCEECGKAFSIFSTPTKHKIIH) adopts a C2H2-type 7; degenerate zinc-finger fold. The segment at 221–243 (HRCEEYCKAYKESSHLTTHKRIH) adopts a C2H2-type 8; degenerate zinc-finger fold. 14 C2H2-type zinc fingers span residues 249 to 271 (YKCE…KIIH), 277 to 299 (HRCE…KRIH), 305 to 327 (YKCE…KIIH), 333 to 355 (YKCE…RIIH), 361 to 383 (YKCE…KIIH), 389 to 411 (YKCE…KMIH), 417 to 439 (YKCE…KRIH), 445 to 467 (YKCK…KIIH), 473 to 495 (YKCE…KKIH), 501 to 523 (YKCE…KQIH), 529 to 551 (YKCE…KIIH), 557 to 579 (YKCE…KIIH), 585 to 607 (CKCE…KLIH), and 613 to 635 (YKCE…KIIH).

It is found in the nucleus. Its function is as follows. May be involved in transcriptional regulation. This is Zinc finger protein 493 (ZNF493) from Homo sapiens (Human).